Here is a 704-residue protein sequence, read N- to C-terminus: MKIVLVLAGLIALVQSSVVHPPPHVLKTKDVDTVFVERQKKVLSLFQDVDQLNTNDEYYKIGKDYDIEANIDNYTNKKAVEDFLKMYRCGFLPKYNEFSVFHDKLRDEAIALFHLFYYAKDFDTFYKSAAFARVHLNQGQFLYAYYIAIIQRKDTYGIVLPAPYEIYPELFVNIDTTYKMFRTKMQNGLINPEAAVEYGIVKEDNHYVYYSNYSNAITYYNEEQRLAYFTEDIGLNAYYFFFHIHLPFWWTAEKYGNLKERRGEMYHYFYDQLLTRYYFERLTNGLGTIPEFSWYSPVKTGHYPLLTSYYTPFSQRPNFYNVHSEENYEKIRFLDAYENYFVQALQKGVFEGFGQTIYLNDSKANSFVGNYWQDNADLYGEEVTKDYQRSYEIVARQVLGAAPKPFDKYTFMPSALDFYQTSLRDPTFYQLYNRIIGYFNQFKQYLEPHSQEKLHFVGVKVNNVVVDKLVTFFEYYDFDATNTVFLTEEELKTKYPHNLKVRQPRLNHQPFNINIDIKADVATDAVVKIFMGPKYNENGFPITLENDWMKFFEMDWFTHKITPGQNTIVRNSNEFVIFKEDSLPSTELYKLLEKGKVPFDMSEDFGYLPKRLMLPRGTKGGFPFQFVVFVYPFESTTKNLTPYEKFMIDNKPLGYPFDRPVDTSCFKQPNIFFRDVSVYHEGEYHAYEYNVPAYFSHTNKVPKE.

An N-terminal signal peptide occupies residues 1 to 16 (MKIVLVLAGLIALVQS). N-linked (GlcNAc...) asparagine glycans are attached at residues Asn73, Asn212, and Asn360.

This sequence belongs to the hemocyanin family. In terms of assembly, homohexamer of two stacked trimers; disulfide-linked. Post-translationally, glycosylation at Asn-360 is required for proper folding.

It is found in the secreted. Its subcellular location is the extracellular space. Its function is as follows. Arylphorin is a larval storage protein (LSP) which may serve as a storage protein used primarily as a source of aromatic amino acids for protein synthesis during metamorphosis. It is a constituent of the sclerotizing system of the cuticle, and serves as a carrier for ecdysteroid hormone. The protein is Arylphorin of Antheraea pernyi (Chinese oak silk moth).